Here is a 392-residue protein sequence, read N- to C-terminus: L-rhamnonate dehydratase (392 aa).

Substrate contacts are provided by His22 and Arg48. Residues Asp214, Glu240, and Glu268 each contribute to the Mg(2+) site. His318 acts as the Proton acceptor in catalysis. Residue Glu338 coordinates substrate.

This sequence belongs to the mandelate racemase/muconate lactonizing enzyme family. RhamD subfamily. As to quaternary structure, homooctamer; tetramer of dimers. Requires Mg(2+) as cofactor.

It catalyses the reaction L-rhamnonate = 2-dehydro-3-deoxy-L-rhamnonate + H2O. In terms of biological role, catalyzes the dehydration of L-rhamnonate to 2-keto-3-deoxy-L-rhamnonate (KDR). In Burkholderia ambifaria (strain ATCC BAA-244 / DSM 16087 / CCUG 44356 / LMG 19182 / AMMD) (Burkholderia cepacia (strain AMMD)), this protein is L-rhamnonate dehydratase.